Reading from the N-terminus, the 71-residue chain is 26S proteasome complex subunit rpn15 (71 aa).

The tract at residues 1–38 (MSRAALPSLENLEDDDEFEDFATENWPMKDTELDTGDD) is disordered. Over residues 11-22 (NLEDDDEFEDFA) the composition is skewed to acidic residues. The interval 16-25 (DEFEDFATEN) is UBS-II. Positions 38–49 (DTLWENNWDDED) are UBS-I.

This sequence belongs to the DSS1/SEM1 family. As to quaternary structure, interacts with mlo3, rae1, nup98/nup189 and nup146. Interacts with rad24. Interacts (via UBSs) with ubiquitin (ubi3/ubi5).

The protein resides in the cytoplasm. The protein localises to the nucleus. Its function is as follows. Versatile protein that might stabilize multiple protein complexes involved in diverse pathways. Subunit of the 26S proteasome which plays a role in ubiquitin-dependent proteolysis. Acts as a ubiquitin receptor of the 26S proteasome, by interacting with ubiquitin chains linked by 'Lys-63' and 'Lys-48'. Involved in nuclear export of specific sets of mRNAs. Links the mRNA adapter mlo3 to rae1 for targeting mRNA-protein complex to the proteins of the nucleoporin complex (NPC). Involved in recombinational repair of DNA. Plays a critical role in linking repair and checkpoint factors to damaged DNA sites by specifically recruiting rad24 and cdc25 to the DSBs. The sequence is that of 26S proteasome complex subunit rpn15 (rpn15) from Schizosaccharomyces pombe (strain 972 / ATCC 24843) (Fission yeast).